The following is a 464-amino-acid chain: ATP-dependent protease ATPase subunit HslU (464 aa).

Residues Val18, 60 to 65, Asp277, Glu342, and Arg414 each bind ATP; that span reads GVGKTE.

Belongs to the ClpX chaperone family. HslU subfamily. In terms of assembly, a double ring-shaped homohexamer of HslV is capped on each side by a ring-shaped HslU homohexamer. The assembly of the HslU/HslV complex is dependent on binding of ATP.

It localises to the cytoplasm. Functionally, ATPase subunit of a proteasome-like degradation complex; this subunit has chaperone activity. The binding of ATP and its subsequent hydrolysis by HslU are essential for unfolding of protein substrates subsequently hydrolyzed by HslV. HslU recognizes the N-terminal part of its protein substrates and unfolds these before they are guided to HslV for hydrolysis. The sequence is that of ATP-dependent protease ATPase subunit HslU from Lactobacillus delbrueckii subsp. bulgaricus (strain ATCC 11842 / DSM 20081 / BCRC 10696 / JCM 1002 / NBRC 13953 / NCIMB 11778 / NCTC 12712 / WDCM 00102 / Lb 14).